The following is a 440-amino-acid chain: Putative sodium-coupled neutral amino acid transporter 8 (440 aa).

11 helical membrane passes run Ala29–Phe49, Ala58–Tyr78, Ile100–Leu120, Phe156–Ser176, Ile183–Met203, Met223–Ile243, Trp255–Ile275, Val300–Leu320, Val350–Ile370, Val373–Leu393, and Val418–Ala438.

This sequence belongs to the amino acid/polyamine transporter 2 family.

The protein localises to the membrane. Its function is as follows. Putative sodium-dependent amino acid/proton antiporter. The chain is Putative sodium-coupled neutral amino acid transporter 8 (slc38a8) from Xenopus tropicalis (Western clawed frog).